Here is a 503-residue protein sequence, read N- to C-terminus: Probable cytosol aminopeptidase (503 aa).

Residues Lys274 and Asp279 each contribute to the Mn(2+) site. The active site involves Lys286. Mn(2+)-binding residues include Asp297, Asp356, and Glu358. The active site involves Arg360.

This sequence belongs to the peptidase M17 family. Mn(2+) serves as cofactor.

Its subcellular location is the cytoplasm. It carries out the reaction Release of an N-terminal amino acid, Xaa-|-Yaa-, in which Xaa is preferably Leu, but may be other amino acids including Pro although not Arg or Lys, and Yaa may be Pro. Amino acid amides and methyl esters are also readily hydrolyzed, but rates on arylamides are exceedingly low.. It catalyses the reaction Release of an N-terminal amino acid, preferentially leucine, but not glutamic or aspartic acids.. Functionally, presumably involved in the processing and regular turnover of intracellular proteins. Catalyzes the removal of unsubstituted N-terminal amino acids from various peptides. The chain is Probable cytosol aminopeptidase from Burkholderia orbicola (strain MC0-3).